The chain runs to 298 residues: Putative F-box and FNIP repeat-containing protein R286 (298 aa).

Residues L4–V48 enclose the F-box domain. 2 FNIP repeats span residues F124 to N165 and W255 to R297.

The polypeptide is Putative F-box and FNIP repeat-containing protein R286 (Acanthamoeba polyphaga (Amoeba)).